The following is a 578-amino-acid chain: Telomere repeat-binding protein 1 (578 aa).

A Ubiquitin-like domain is found at valine 293 to glutamate 372. The disordered stretch occupies residues glutamate 440 to isoleucine 467. An HTH myb-type domain is found at alanine 463 to lysine 522. Interaction with DNA stretches follow at residues arginine 465–arginine 469, lysine 511–lysine 515, and lysine 522–arginine 529. Positions tryptophan 491–valine 518 form a DNA-binding region, H-T-H motif.

In terms of assembly, homodimer and heterodimer with TRP2 and TRP3. Interacts with KU70. As to expression, expressed ubiquitously. Highest expression in flowers and leaves.

It localises to the nucleus. In terms of biological role, binds specifically to the plant telomeric double-stranded DNA sequences 5'-GGTTTAG-3'. At least 4 repeats of telomeric sequences are required for binding. Induces DNA bending. This Arabidopsis thaliana (Mouse-ear cress) protein is Telomere repeat-binding protein 1 (TRP1).